The chain runs to 27 residues: Chitinase 47 kDa (27 aa).

One can recognise a GH18 domain in the interval 3–27; sequence SKVVGYFTEWGTYDRKYYVKNIEXS.

This sequence belongs to the glycosyl hydrolase 18 family. Chitinase class II subfamily. In terms of assembly, homodimer.

The catalysed reaction is Random endo-hydrolysis of N-acetyl-beta-D-glucosaminide (1-&gt;4)-beta-linkages in chitin and chitodextrins.. Able to cleave chitin oligomers from N=3 to 6. In Streptomyces olivaceoviridis (Streptomyces corchorusii), this protein is Chitinase 47 kDa.